Here is a 157-residue protein sequence, read N- to C-terminus: Transcriptional repressor NrdR (157 aa).

The segment at 3 to 34 (CPFCGHEDTQVKDSRPTDDGTAIRRRRSCTAC) is a zinc-finger region. The region spanning 49–139 (LIVVKTDQRR…VYRNFSDAGD (91 aa)) is the ATP-cone domain.

This sequence belongs to the NrdR family. Requires Zn(2+) as cofactor.

Negatively regulates transcription of bacterial ribonucleotide reductase nrd genes and operons by binding to NrdR-boxes. In Granulibacter bethesdensis (strain ATCC BAA-1260 / CGDNIH1), this protein is Transcriptional repressor NrdR.